The sequence spans 504 residues: Glycerol kinase (504 aa).

Thr12 provides a ligand contact to ADP. Residues Thr12, Thr13, and Ser14 each coordinate ATP. Sn-glycerol 3-phosphate is bound at residue Thr12. ADP is bound at residue Arg16. 4 residues coordinate sn-glycerol 3-phosphate: Arg82, Glu83, Tyr134, and Asp249. Residues Arg82, Glu83, Tyr134, Asp249, and Gln250 each coordinate glycerol. ADP is bound by residues Thr271 and Gly315. Residues Thr271, Gly315, Gln319, and Gly416 each coordinate ATP. 2 residues coordinate ADP: Gly416 and Asn420.

This sequence belongs to the FGGY kinase family.

The enzyme catalyses glycerol + ATP = sn-glycerol 3-phosphate + ADP + H(+). It participates in polyol metabolism; glycerol degradation via glycerol kinase pathway; sn-glycerol 3-phosphate from glycerol: step 1/1. With respect to regulation, inhibited by fructose 1,6-bisphosphate (FBP). Functionally, key enzyme in the regulation of glycerol uptake and metabolism. Catalyzes the phosphorylation of glycerol to yield sn-glycerol 3-phosphate. This is Glycerol kinase from Mycobacteroides abscessus (strain ATCC 19977 / DSM 44196 / CCUG 20993 / CIP 104536 / JCM 13569 / NCTC 13031 / TMC 1543 / L948) (Mycobacterium abscessus).